The chain runs to 559 residues: Pentatricopeptide repeat-containing protein At1g08610 (559 aa).

PPR repeat units follow at residues 103 to 137, 138 to 172, 173 to 207, 208 to 242, 243 to 277, 278 to 312, 313 to 347, 348 to 382, 383 to 417, 418 to 452, 453 to 487, 488 to 522, and 523 to 557; these read DEETNNEILHNLCSNGKLTDACKLVEVMARHNQVP, HFPSCSNLVRGLARIDQLDKAMCILRVMVMSGGVP, DTITYNMIIGNLCKKGHIRTALVLLEDMSLSGSPP, DVITYNTVIRCMFDYGNAEQAIRFWKDQLQNGCPP, FMITYTVLVELVCRYCGSARAIEVLEDMAVEGCYP, DIVTYNSLVNYNCRRGNLEEVASVIQHILSHGLEL, NTVTYNTLLHSLCSHEYWDEVEEILNIMYQTSYCP, TVITYNILINGLCKARLLSRAIDFFYQMLEQKCLP, DIVTYNTVLGAMSKEGMVDDAIELLGLLKNTCCPP, GLITYNSVIDGLAKKGLMKKALELYHQMLDAGIFP, DDITRRSLIYGFCRANLVEEAGQVLKETSNRGNGI, RGSTYRLVIQGLCKKKEIEMAIEVVEIMLTGGCKP, and DETIYTAIVKGVEEMGMGSEAVQLQKKLKQWKLLK.

Belongs to the PPR family. P subfamily.

This chain is Pentatricopeptide repeat-containing protein At1g08610, found in Arabidopsis thaliana (Mouse-ear cress).